We begin with the raw amino-acid sequence, 543 residues long: Acrosin-binding protein (543 aa).

The signal sequence occupies residues 1–25 (MGQPAAGSILTLLRVLLLPLGPALA). The tract at residues 26-106 (QDSPSAPTPG…ASWFESFCQF (81 aa)) is pro-ACR binding. A propeptide spans 26–276 (QDSPSAPTPG…DPHSFTARVR (251 aa)) (removed in mature form). The disordered stretch occupies residues 187-239 (AGQEQAAGHKQEQGQEQHKQDPTQEHKQDDGQEQEEQEEEQEEEGKQEEGQSV). Residues 193–216 (AGHKQEQGQEQHKQDPTQEHKQDD) are compositionally biased toward basic and acidic residues. Positions 217–232 (GQEQEEQEEEQEEEGK) are enriched in acidic residues. The interval 319–427 (LPHKEALLVL…TQAGTSESGR (109 aa)) is pro-ACR binding.

In terms of assembly, binds proacrosin (ACR). Does not bind the mature form of ACR. The N-terminus is blocked. Post-translationally, phosphorylated on Tyr residues in capacitated sperm. In terms of processing, synthesized as a 60-kDa precursor, the 32-kDa mature form is post-translationally produced by the removal of the N-terminal half of the precursor during sperm maturation in the testis and/or epididymis. Specifically expressed in testis.

It localises to the secreted. It is found in the cytoplasmic vesicle. The protein localises to the secretory vesicle. The protein resides in the acrosome. In terms of biological role, acrosomal protein that maintains proacrosin (pro-ACR) as an enzymatically inactive zymogen in the acrosome. Involved also in the acrosome formation. In Cavia porcellus (Guinea pig), this protein is Acrosin-binding protein (ACRBP).